Reading from the N-terminus, the 371-residue chain is Lombricine kinase (371 aa).

The Phosphagen kinase N-terminal domain maps to 1 to 86; the sequence is MPKFTARQNF…FDAVINEKHG (86 aa). The region spanning 113–355 is the Phosphagen kinase C-terminal domain; the sequence is YVKSARIRTG…GKLIEYEKLL (243 aa). ATP is bound by residues 116–120, His-179, Arg-224, Arg-280, 308–313, and Asp-323; these read SARIR and RGTGGE.

The protein belongs to the ATP:guanido phosphotransferase family. As to quaternary structure, homodimer.

It catalyses the reaction L-lombricine + ATP = N-phospho-L-lombricine + ADP + H(+). The protein is Lombricine kinase of Eisenia fetida (Red wiggler worm).